The chain runs to 571 residues: Dehydrocurvularin exporter (571 aa).

The tract at residues Met-1–Asp-34 is disordered. The segment covering Glu-8–Arg-17 has biased composition (basic and acidic residues). Residues Gln-19–Gln-28 show a composition bias toward polar residues. An N-linked (GlcNAc...) asparagine glycan is attached at Asn-25. 14 helical membrane-spanning segments follow: residues Ile-47–Ile-67, Trp-86–Phe-106, Phe-120–Ile-140, Ala-143–Val-163, Leu-171–Gly-191, Trp-202–Leu-222, Ile-238–Thr-258, Val-275–Phe-295, Leu-317–Phe-337, Val-350–Ile-370, Phe-379–Val-399, Met-405–Met-425, Ile-443–Phe-463, and Val-514–Phe-534. The segment at Pro-538–Ser-571 is disordered.

The protein belongs to the major facilitator superfamily. TCR/Tet family.

Its subcellular location is the cell membrane. In terms of biological role, efflux pump that is probably involved in the export of dehydrocurvularin. This chain is Dehydrocurvularin exporter, found in Aspergillus terreus.